A 95-amino-acid chain; its full sequence is Large ribosomal subunit protein uL23 (95 aa).

It belongs to the universal ribosomal protein uL23 family. Part of the 50S ribosomal subunit. Contacts protein L29, and trigger factor when it is bound to the ribosome.

In terms of biological role, one of the early assembly proteins it binds 23S rRNA. One of the proteins that surrounds the polypeptide exit tunnel on the outside of the ribosome. Forms the main docking site for trigger factor binding to the ribosome. This is Large ribosomal subunit protein uL23 from Deinococcus deserti (strain DSM 17065 / CIP 109153 / LMG 22923 / VCD115).